Here is a 461-residue protein sequence, read N- to C-terminus: ATP-dependent protease ATPase subunit HslU (461 aa).

Residues Val-21, 63–68, Asp-274, Glu-339, and Arg-411 each bind ATP; that span reads GVGKTE.

It belongs to the ClpX chaperone family. HslU subfamily. A double ring-shaped homohexamer of HslV is capped on each side by a ring-shaped HslU homohexamer. The assembly of the HslU/HslV complex is dependent on binding of ATP.

The protein localises to the cytoplasm. In terms of biological role, ATPase subunit of a proteasome-like degradation complex; this subunit has chaperone activity. The binding of ATP and its subsequent hydrolysis by HslU are essential for unfolding of protein substrates subsequently hydrolyzed by HslV. HslU recognizes the N-terminal part of its protein substrates and unfolds these before they are guided to HslV for hydrolysis. The protein is ATP-dependent protease ATPase subunit HslU of Caldanaerobacter subterraneus subsp. tengcongensis (strain DSM 15242 / JCM 11007 / NBRC 100824 / MB4) (Thermoanaerobacter tengcongensis).